The chain runs to 235 residues: Protein GrpE (235 aa).

Composition is skewed to basic and acidic residues over residues 1 to 16 (MENK…HEKN) and 24 to 35 (NNVKKENLHEDQ). The disordered stretch occupies residues 1–51 (MENKNQKHNNEFHEKNQQSQKDNNNVKKENLHEDQSDLNDANFDDGGKKNK).

This sequence belongs to the GrpE family. In terms of assembly, homodimer.

Its subcellular location is the cytoplasm. In terms of biological role, participates actively in the response to hyperosmotic and heat shock by preventing the aggregation of stress-denatured proteins, in association with DnaK and GrpE. It is the nucleotide exchange factor for DnaK and may function as a thermosensor. Unfolded proteins bind initially to DnaJ; upon interaction with the DnaJ-bound protein, DnaK hydrolyzes its bound ATP, resulting in the formation of a stable complex. GrpE releases ADP from DnaK; ATP binding to DnaK triggers the release of the substrate protein, thus completing the reaction cycle. Several rounds of ATP-dependent interactions between DnaJ, DnaK and GrpE are required for fully efficient folding. The polypeptide is Protein GrpE (Malacoplasma penetrans (strain HF-2) (Mycoplasma penetrans)).